The following is a 210-amino-acid chain: 2-hydroxy-3-keto-5-methylthiopentenyl-1-phosphate phosphatase (210 aa).

The protein belongs to the HAD-like hydrolase superfamily. MtnX family.

It carries out the reaction 2-hydroxy-5-methylsulfanyl-3-oxopent-1-enyl phosphate + H2O = 1,2-dihydroxy-5-(methylsulfanyl)pent-1-en-3-one + phosphate. It participates in amino-acid biosynthesis; L-methionine biosynthesis via salvage pathway; L-methionine from S-methyl-5-thio-alpha-D-ribose 1-phosphate: step 4/6. Its function is as follows. Dephosphorylates 2-hydroxy-3-keto-5-methylthiopentenyl-1-phosphate (HK-MTPenyl-1-P) yielding 1,2-dihydroxy-3-keto-5-methylthiopentene (DHK-MTPene). The protein is 2-hydroxy-3-keto-5-methylthiopentenyl-1-phosphate phosphatase of Microcystis aeruginosa.